A 55-amino-acid chain; its full sequence is MAKKGARVQVTLEHKCEQGVYRYHTTKNRRNTTDRLELKKYSPVTKQHEIFKEIK.

Belongs to the bacterial ribosomal protein bL33 family.

It localises to the plastid. Its subcellular location is the chloroplast. This Emiliania huxleyi (Coccolithophore) protein is Large ribosomal subunit protein bL33c.